Here is a 602-residue protein sequence, read N- to C-terminus: Fructan 1-exohydrolase (602 aa).

An N-terminal signal peptide occupies residues 1 to 19; it reads MAQAWAFLLLPVLLLSSYA. Residue Asp81 is part of the active site. Residues Asn174, Asn242, and Asn254 are each glycosylated (N-linked (GlcNAc...) asparagine). Cys452 and Cys498 are disulfide-bonded.

The protein belongs to the glycosyl hydrolase 32 family. In terms of tissue distribution, detected in leaves, with maximum levels at the leaf tip.

It carries out the reaction Hydrolysis of terminal, non-reducing (2-&gt;1)-linked beta-D-fructofuranose residues in fructans.. With respect to regulation, inhibited by sucrose. In terms of biological role, hydrolyzes inulin-type beta-(2,1)-fructans. Has low activity against beta-(2,6)-linked fructans. May play a role as a beta-(2,1)-trimmer during graminan biosynthesis. The chain is Fructan 1-exohydrolase from Bromus pictus (Patagonian grass).